Consider the following 471-residue polypeptide: Putative F-box protein At5g36200 (471 aa).

One can recognise an F-box domain in the interval 1–46 (MAMSDLPNDLVEEIISRVPVKSIRAVSSTCKNWNTLSNDHSFTRKL).

The protein is Putative F-box protein At5g36200 of Arabidopsis thaliana (Mouse-ear cress).